Here is a 109-residue protein sequence, read N- to C-terminus: Anther-specific protein MZm3-3 (109 aa).

Positions Met1–Ala41 are cleaved as a signal peptide. Intrachain disulfides connect Cys45-Cys86, Cys55-Cys75, Cys76-Cys101, and Cys88-Cys108.

The protein belongs to the A9/FIL1 family. In terms of tissue distribution, tapetum of anthers.

The protein localises to the secreted. The polypeptide is Anther-specific protein MZm3-3 (Zea mays (Maize)).